The primary structure comprises 87 residues: Beta-toxin Cn5 (87 aa).

An N-terminal signal peptide occupies residues 1-19; it reads MNSLLMITACLFLIGTVWA. The region spanning 20 to 85 is the LCN-type CS-alpha/beta domain; sequence KEGYLVNKST…TYPLPNKSCS (66 aa). 4 disulfides stabilise this stretch: Cys-31/Cys-84, Cys-35/Cys-60, Cys-44/Cys-65, and Cys-48/Cys-67.

It belongs to the long (4 C-C) scorpion toxin superfamily. Sodium channel inhibitor family. Beta subfamily. Expressed by the venom gland.

Its subcellular location is the secreted. In terms of biological role, beta toxins bind voltage-independently at site-4 of sodium channels (Nav) and shift the voltage of activation toward more negative potentials thereby affecting sodium channel activation and promoting spontaneous and repetitive firing. This toxin is lethal to crustaceans (freshwater crayfish (Cambarellus montezumae spp.)), it provokes a reversible paralysis to insects (crickets (Achaeta spp.)), but is not toxic to mice. At high concentrations, it does displace the (beta) mammal-specific toxin Cn2 from rat brain synaptosomes. The chain is Beta-toxin Cn5 from Centruroides noxius (Mexican scorpion).